We begin with the raw amino-acid sequence, 178 residues long: 6,7-dimethyl-8-ribityllumazine synthase (178 aa).

5-amino-6-(D-ribitylamino)uracil-binding positions include Tyr-27, 58 to 60, and 82 to 84; these read SLE and CVI. 87-88 is a (2S)-2-hydroxy-3-oxobutyl phosphate binding site; that stretch reads AT. His-90 acts as the Proton donor in catalysis. Position 114 (Asn-114) interacts with 5-amino-6-(D-ribitylamino)uracil. Arg-128 provides a ligand contact to (2S)-2-hydroxy-3-oxobutyl phosphate.

This sequence belongs to the DMRL synthase family.

The enzyme catalyses (2S)-2-hydroxy-3-oxobutyl phosphate + 5-amino-6-(D-ribitylamino)uracil = 6,7-dimethyl-8-(1-D-ribityl)lumazine + phosphate + 2 H2O + H(+). Its pathway is cofactor biosynthesis; riboflavin biosynthesis; riboflavin from 2-hydroxy-3-oxobutyl phosphate and 5-amino-6-(D-ribitylamino)uracil: step 1/2. Its function is as follows. Catalyzes the formation of 6,7-dimethyl-8-ribityllumazine by condensation of 5-amino-6-(D-ribitylamino)uracil with 3,4-dihydroxy-2-butanone 4-phosphate. This is the penultimate step in the biosynthesis of riboflavin. This is 6,7-dimethyl-8-ribityllumazine synthase from Jannaschia sp. (strain CCS1).